The sequence spans 521 residues: Leucine-rich repeat-containing protein 24 (521 aa).

Positions Met1–Gly23 are cleaved as a signal peptide. One can recognise an LRRNT domain in the interval Leu24–Pro58. LRR repeat units lie at residues Gly59–Pro80, Ala83–Ala104, Arg107–Gly128, Gln131–His152, Arg155–Gly176, and Ser179–Pro200. N-linked (GlcNAc...) asparagine glycosylation is present at Asn91. The LRRCT domain occupies Asn212 to Pro267. One can recognise an Ig-like C2-type domain in the interval Pro268–Asn371. Cys289 and Cys353 are disulfide-bonded. Positions Gln306–Thr330 are disordered. Residues Asn342 and Asn371 are each glycosylated (N-linked (GlcNAc...) asparagine). Residues Arg374–Pro395 are disordered. The chain crosses the membrane as a helical span at residues Ala414 to Cys434.

It localises to the membrane. This is Leucine-rich repeat-containing protein 24 (Lrrc24) from Mus musculus (Mouse).